Here is a 223-residue protein sequence, read N- to C-terminus: Crossover junction endodeoxyribonuclease RuvC (223 aa).

Active-site residues include Asp-12, Glu-73, and Asp-146. Mg(2+)-binding residues include Asp-12, Glu-73, and Asp-146. The interval 182–223 is disordered; it reads QGKLGKAKSTLNARNNAQVTGDAQVRAGHPSQFERPDRADPR. Residues 190–202 are compositionally biased toward polar residues; it reads STLNARNNAQVTG. Over residues 213-223 the composition is skewed to basic and acidic residues; that stretch reads QFERPDRADPR.

This sequence belongs to the RuvC family. Homodimer which binds Holliday junction (HJ) DNA. The HJ becomes 2-fold symmetrical on binding to RuvC with unstacked arms; it has a different conformation from HJ DNA in complex with RuvA. In the full resolvosome a probable DNA-RuvA(4)-RuvB(12)-RuvC(2) complex forms which resolves the HJ. Requires Mg(2+) as cofactor.

It is found in the cytoplasm. It carries out the reaction Endonucleolytic cleavage at a junction such as a reciprocal single-stranded crossover between two homologous DNA duplexes (Holliday junction).. Functionally, the RuvA-RuvB-RuvC complex processes Holliday junction (HJ) DNA during genetic recombination and DNA repair. Endonuclease that resolves HJ intermediates. Cleaves cruciform DNA by making single-stranded nicks across the HJ at symmetrical positions within the homologous arms, yielding a 5'-phosphate and a 3'-hydroxyl group; requires a central core of homology in the junction. The consensus cleavage sequence is 5'-(A/T)TT(C/G)-3'. Cleavage occurs on the 3'-side of the TT dinucleotide at the point of strand exchange. HJ branch migration catalyzed by RuvA-RuvB allows RuvC to scan DNA until it finds its consensus sequence, where it cleaves and resolves the cruciform DNA. The polypeptide is Crossover junction endodeoxyribonuclease RuvC (Corynebacterium efficiens (strain DSM 44549 / YS-314 / AJ 12310 / JCM 11189 / NBRC 100395)).